Here is a 513-residue protein sequence, read N- to C-terminus: ATP synthase subunit alpha 2 (513 aa).

169–176 is a binding site for ATP; the sequence is GDRQVGKT.

It belongs to the ATPase alpha/beta chains family. In terms of assembly, F-type ATPases have 2 components, CF(1) - the catalytic core - and CF(0) - the membrane proton channel. CF(1) has five subunits: alpha(3), beta(3), gamma(1), delta(1), epsilon(1). CF(0) has three main subunits: a(1), b(2) and c(9-12). The alpha and beta chains form an alternating ring which encloses part of the gamma chain. CF(1) is attached to CF(0) by a central stalk formed by the gamma and epsilon chains, while a peripheral stalk is formed by the delta and b chains.

The protein resides in the cell inner membrane. The enzyme catalyses ATP + H2O + 4 H(+)(in) = ADP + phosphate + 5 H(+)(out). Its function is as follows. Produces ATP from ADP in the presence of a proton gradient across the membrane. The alpha chain is a regulatory subunit. This Psychromonas ingrahamii (strain DSM 17664 / CCUG 51855 / 37) protein is ATP synthase subunit alpha 2.